A 170-amino-acid polypeptide reads, in one-letter code: Co-chaperone protein HscB homolog (170 aa).

A J domain is found at 5 to 79 (DHFSLFGLPT…RARYLCEQAG (75 aa)).

The protein belongs to the HscB family. Interacts with HscA and stimulates its ATPase activity.

Functionally, co-chaperone involved in the maturation of iron-sulfur cluster-containing proteins. Seems to help targeting proteins to be folded toward HscA. The sequence is that of Co-chaperone protein HscB homolog from Bordetella bronchiseptica (strain ATCC BAA-588 / NCTC 13252 / RB50) (Alcaligenes bronchisepticus).